Consider the following 358-residue polypeptide: Membrane-bound lytic murein transglycosylase C (358 aa).

An N-terminal signal peptide occupies residues 1-16 (MKKILALLVIAPLLVS). Cysteine 17 is lipidated: N-palmitoyl cysteine. Cysteine 17 carries the S-diacylglycerol cysteine lipid modification.

Belongs to the transglycosylase Slt family.

It localises to the cell outer membrane. It carries out the reaction Exolytic cleavage of the (1-&gt;4)-beta-glycosidic linkage between N-acetylmuramic acid (MurNAc) and N-acetylglucosamine (GlcNAc) residues in peptidoglycan, from either the reducing or the non-reducing ends of the peptidoglycan chains, with concomitant formation of a 1,6-anhydrobond in the MurNAc residue.. Functionally, murein-degrading enzyme. May play a role in recycling of muropeptides during cell elongation and/or cell division. In Yersinia pseudotuberculosis serotype O:1b (strain IP 31758), this protein is Membrane-bound lytic murein transglycosylase C.